We begin with the raw amino-acid sequence, 204 residues long: MYVVAITGGIGSGKTTIANQFAELGIDVVDADVIAREVVEPGAPALAAIAAHFGPDVIAADGQLDRRSLRERVFSDPDAKVWLNALLHPLIRQEMFGRCAAAHSPYCLLVVPLLVENKLTGLANRVLVIDVDEATQIERTCRRDGVSREQVQAILAAQASRAERLAAADDVLDNKNGAPETIKPRILALHETYMAFASQQASQV.

The DPCK domain occupies 3 to 200 (VVAITGGIGS…ETYMAFASQQ (198 aa)). 11–16 (GSGKTT) is an ATP binding site.

It belongs to the CoaE family.

The protein localises to the cytoplasm. It catalyses the reaction 3'-dephospho-CoA + ATP = ADP + CoA + H(+). It functions in the pathway cofactor biosynthesis; coenzyme A biosynthesis; CoA from (R)-pantothenate: step 5/5. In terms of biological role, catalyzes the phosphorylation of the 3'-hydroxyl group of dephosphocoenzyme A to form coenzyme A. This is Dephospho-CoA kinase from Aeromonas hydrophila.